The chain runs to 441 residues: Transforming protein p54/c-ets-1 (441 aa).

One can recognise a PNT domain in the interval 51–136; it reads ATFSGFAKEQ…EHLEILQKEE (86 aa). Positions 130-243 are activation domain; required for transcription activation; sequence EILQKEEAKP…DNMCMGRASR (114 aa). The interval 304-312 is helix HI-1; it reads FKDYVRDRA. The segment at 323–330 is helix HI-2; that stretch reads AAALAGYT. The ETS DNA-binding region spans 335–415; sequence IQLWQFLLEL…AGKRYVYRFV (81 aa). A helix H4 region spans residues 418–422; it reads LQSLL. Residues 426–432 form a helix H5 region; it reads PEELHAM.

This sequence belongs to the ETS family. Binds DNA as a homodimer; homodimerization is required for transcription activation.

It localises to the nucleus. It is found in the cytoplasm. Autoinhibited by a module composed of four alpha helices (HI-1, HI-2, H4, and H5) that flank the DNA-binding ETS domain, reducing the affinity for DNA. Its function is as follows. Transcription factor. Directly controls the expression of cytokine and chemokine genes in a wide variety of different cellular contexts. The polypeptide is Transforming protein p54/c-ets-1 (ETS1) (Gallus gallus (Chicken)).